A 488-amino-acid chain; its full sequence is DNA polymerase II small subunit (488 aa).

This sequence belongs to the DNA polymerase delta/II small subunit family. As to quaternary structure, heterodimer of a large subunit and a small subunit.

It catalyses the reaction DNA(n) + a 2'-deoxyribonucleoside 5'-triphosphate = DNA(n+1) + diphosphate. The enzyme catalyses Exonucleolytic cleavage in the 3'- to 5'-direction to yield nucleoside 5'-phosphates.. Its function is as follows. Possesses two activities: a DNA synthesis (polymerase) and an exonucleolytic activity that degrades single-stranded DNA in the 3' to 5' direction. Has a template-primer preference which is characteristic of a replicative DNA polymerase. This is DNA polymerase II small subunit (polB) from Thermoplasma acidophilum (strain ATCC 25905 / DSM 1728 / JCM 9062 / NBRC 15155 / AMRC-C165).